A 103-amino-acid chain; its full sequence is Cell division suppressor protein YneA (103 aa).

The LysM domain maps to 36–87 (VKIEVQSGDTLWGLADQVNDSKSIDKNAFIDWVTQHNDLASTEIQPGDILVI).

It belongs to the YneA family.

The protein localises to the cytoplasm. Functionally, inhibits cell division during the SOS response. Affects a later stage of the cell division protein assembly, after the assembly of the Z ring, by probably suppressing recruitment of FtsL and/or DivIC to the division machinery. The protein is Cell division suppressor protein YneA of Bacillus pumilus (strain SAFR-032).